A 795-amino-acid chain; its full sequence is Phenylalanine--tRNA ligase beta subunit (795 aa).

The region spanning 39-148 (AGTFNGVVVG…LDAPIGTDLR (110 aa)) is the tRNA-binding domain. A B5 domain is found at 401–476 (PKVNTVQLRR…RIYGYNSIPN (76 aa)). Mg(2+) is bound by residues Asp454, Asp460, Glu463, and Glu464. One can recognise an FDX-ACB domain in the interval 701-794 (SKFPANRRDL…VKQRFNAELR (94 aa)).

It belongs to the phenylalanyl-tRNA synthetase beta subunit family. Type 1 subfamily. In terms of assembly, tetramer of two alpha and two beta subunits. The cofactor is Mg(2+).

Its subcellular location is the cytoplasm. It catalyses the reaction tRNA(Phe) + L-phenylalanine + ATP = L-phenylalanyl-tRNA(Phe) + AMP + diphosphate + H(+). This is Phenylalanine--tRNA ligase beta subunit from Haemophilus influenzae (strain 86-028NP).